The sequence spans 614 residues: Afadin- and alpha-actinin-binding protein (614 aa).

2 coiled-coil regions span residues 131-227 (MDHL…IAMD) and 266-293 (RQKQ…SLLS). Residues S290, S293, and S312 each carry the phosphoserine modification. The interval 292–317 (LSPQKKKPRERVDDSTGTVISDVEED) is disordered. Positions 374-460 (ISRQDHEQET…RSFTEAAIRL (87 aa)) form a coiled coil. Phosphoserine occurs at positions 536, 540, and 542.

This sequence belongs to the ADIP family. Interacts with afadin and alpha-actinin. Interacts with VAV2. Interacts with SSX2 and SSX3. Does not interact with SSX1 and SSX4. Interacts with PCM1. Interacts with WRAP73. Widely expressed, with the highest expression in brain, intermediate expression in kidney, testis, spinal cord, liver, heart, lung, skeletal muscle, ovary, fetal liver and fetal brain, and little to no expression in pancreas and spleen. All specific brain regions showed intermediate to high expression, with highest expression in amygdala. Also expressed in fetal tissues, mainly in liver and brain.

The protein localises to the cell junction. The protein resides in the adherens junction. It localises to the nucleus. It is found in the cytoplasm. Its subcellular location is the cytoskeleton. The protein localises to the microtubule organizing center. The protein resides in the centrosome. It localises to the centriolar satellite. It is found in the cilium basal body. Functionally, belongs to an adhesion system, which plays a role in the organization of homotypic, interneuronal and heterotypic cell-cell adherens junctions (AJs). May connect the nectin-afadin and E-cadherin-catenin system through alpha-actinin and may be involved in organization of the actin cytoskeleton at AJs through afadin and alpha-actinin. Involved in cell movement: localizes at the leading edge of moving cells in response to PDGF and is required for the formation of the leading edge and the promotion of cell movement, possibly via activation of Rac signaling. Acts as a centrosome maturation factor, probably by maintaining the integrity of the pericentriolar material and proper microtubule nucleation at mitotic spindle poles. The function seems to implicate at least in part WRAP73; the SSX2IP:WRAP73 complex is proposed to act as regulator of spindle anchoring at the mitotic centrosome. Involved in ciliogenesis. It is required for targeted recruitment of the BBSome, CEP290, RAB8, and SSTR3 to the cilia. The polypeptide is Afadin- and alpha-actinin-binding protein (SSX2IP) (Homo sapiens (Human)).